Consider the following 336-residue polypeptide: tRNA-modifying protein YgfZ (336 aa).

Residues tryptophan 28 and tryptophan 191 each coordinate folate.

This sequence belongs to the tRNA-modifying YgfZ family.

The protein resides in the cytoplasm. Functionally, folate-binding protein involved in regulating the level of ATP-DnaA and in the modification of some tRNAs. It is probably a key factor in regulatory networks that act via tRNA modification, such as initiation of chromosomal replication. This chain is tRNA-modifying protein YgfZ, found in Hamiltonella defensa subsp. Acyrthosiphon pisum (strain 5AT).